Reading from the N-terminus, the 334-residue chain is GTP 3',8-cyclase (334 aa).

Residues 11–236 (GFNRKIDYLR…ESTESSQGPA (226 aa)) enclose the Radical SAM core domain. Arg20 serves as a coordination point for GTP. [4Fe-4S] cluster contacts are provided by Cys27 and Cys31. S-adenosyl-L-methionine is bound at residue Tyr33. Cys34 is a [4Fe-4S] cluster binding site. Arg69 provides a ligand contact to GTP. Gly73 serves as a coordination point for S-adenosyl-L-methionine. GTP is bound at residue Thr100. Ser124 serves as a coordination point for S-adenosyl-L-methionine. Residue Lys161 participates in GTP binding. S-adenosyl-L-methionine is bound at residue Met195. 2 residues coordinate [4Fe-4S] cluster: Cys260 and Cys263. Residue 265 to 267 (RVR) participates in GTP binding. Cys277 serves as a coordination point for [4Fe-4S] cluster.

The protein belongs to the radical SAM superfamily. MoaA family. Monomer and homodimer. Requires [4Fe-4S] cluster as cofactor.

The enzyme catalyses GTP + AH2 + S-adenosyl-L-methionine = (8S)-3',8-cyclo-7,8-dihydroguanosine 5'-triphosphate + 5'-deoxyadenosine + L-methionine + A + H(+). It functions in the pathway cofactor biosynthesis; molybdopterin biosynthesis. Functionally, catalyzes the cyclization of GTP to (8S)-3',8-cyclo-7,8-dihydroguanosine 5'-triphosphate. The protein is GTP 3',8-cyclase of Pseudomonas putida (strain GB-1).